Consider the following 222-residue polypeptide: UPF0502 protein PBPRB0676 (222 aa).

Belongs to the UPF0502 family.

In Photobacterium profundum (strain SS9), this protein is UPF0502 protein PBPRB0676.